We begin with the raw amino-acid sequence, 703 residues long: Protein teflon (703 aa).

Residues M32–H55 form a C2H2-type 1 zinc finger. Disordered regions lie at residues T78–S111, S138–P161, and S339–E434. Composition is skewed to polar residues over residues Q84–D94 and S138–P147. Basic and acidic residues predominate over residues P148–P161. Composition is skewed to polar residues over residues S339–V352 and S364–I373. 2 C2H2-type zinc fingers span residues Y649 to H672 and F677 to H700.

The protein belongs to the Teflon family.

Its subcellular location is the nucleus. The protein localises to the chromosome. Its function is as follows. Specifically required in males for proper segregation of autosomal bivalents at meiosis I. Expression is required in the male germ line prior to spermatocyte stage S4. May have a role as a bridging molecule maintaining adhesion to hold autosome bivalents together via heterochromatic connections. In Drosophila pseudoobscura pseudoobscura (Fruit fly), this protein is Protein teflon.